The sequence spans 92 residues: Translation initiation factor IF-1 (92 aa).

Residues Met-1–Lys-72 form the S1-like domain. Positions Phe-69–Arg-92 are disordered.

The protein belongs to the IF-1 family. Component of the 30S ribosomal translation pre-initiation complex which assembles on the 30S ribosome in the order IF-2 and IF-3, IF-1 and N-formylmethionyl-tRNA(fMet); mRNA recruitment can occur at any time during PIC assembly.

It is found in the cytoplasm. Functionally, one of the essential components for the initiation of protein synthesis. Stabilizes the binding of IF-2 and IF-3 on the 30S subunit to which N-formylmethionyl-tRNA(fMet) subsequently binds. Helps modulate mRNA selection, yielding the 30S pre-initiation complex (PIC). Upon addition of the 50S ribosomal subunit IF-1, IF-2 and IF-3 are released leaving the mature 70S translation initiation complex. In Rhodopseudomonas palustris (strain ATCC BAA-98 / CGA009), this protein is Translation initiation factor IF-1.